Consider the following 127-residue polypeptide: Large ribosomal subunit protein bL12 (127 aa).

The protein belongs to the bacterial ribosomal protein bL12 family. As to quaternary structure, homodimer. Part of the ribosomal stalk of the 50S ribosomal subunit. Forms a multimeric L10(L12)X complex, where L10 forms an elongated spine to which 2 to 4 L12 dimers bind in a sequential fashion. Binds GTP-bound translation factors.

In terms of biological role, forms part of the ribosomal stalk which helps the ribosome interact with GTP-bound translation factors. Is thus essential for accurate translation. This is Large ribosomal subunit protein bL12 from Streptomyces virginiae (Streptomyces cinnamonensis).